A 397-amino-acid chain; its full sequence is Subtilisin-like serine protease Pen c 1 (397 aa).

An N-terminal signal peptide occupies residues 1–19; sequence MGFLKVLATSLATLAVVDA. Residues 20–115 constitute a propeptide, removed in mature form; it reads GTLLTASNTD…IEPDMIVNAT (96 aa). One can recognise an Inhibitor I9 domain in the interval 35–113; that stretch reads SYIVVMNDDV…KYIEPDMIVN (79 aa). Residues 125–397 form the Peptidase S8 domain; that stretch reads SWGLARISSK…SKLLYNGINV (273 aa). Residues Asp157, His188, and Ser343 each act as charge relay system in the active site.

It belongs to the peptidase S8 family.

Its subcellular location is the secreted. With respect to regulation, inhibited by 0.1 mM diisopropyl fluorophosphate (DFP), phenylmethanesulfonyl fluoride (PMSF), chymostatin and elastatinal. Not inhibited by N-alpha-p-tosyl-L-lysine chloromethylketone (TLCK), N-tosyl-L-phenylalanyl chloromethyl ketone (TPCK) or N-carbobenzoxy-L-phenylalanine chloromethylketone (ZPCK). Functionally, serine protease. Hydrolyzes azocasein. Cleaves peptide bonds of the oxidized insulin B chain preferably at 15-Leu-|-Tyr-16, but also at 4-Gln-|-His-5 and 24-Phe-|-Phe-25, and to a lesser extent at 5-His-|-Leu-6 and 25-Phe-|-Tyr-26. Hydrolyzes amide bonds between amino acids and 7-amino-4-methylcoumarin (AMC) in vitro. The polypeptide is Subtilisin-like serine protease Pen c 1 (Penicillium citrinum).